The chain runs to 829 residues: Protein Jade-1 (829 aa).

A compositionally biased stretch (polar residues) spans 1 to 10; sequence MKRSRVPSTS. The interval 1–40 is disordered; it reads MKRSRVPSTSEDSDNGSNSTSWSQHSNSKHRKQSGKRPSE. A compositionally biased stretch (low complexity) spans 15–26; that stretch reads NGSNSTSWSQHS. A PHD-type 1 zinc finger spans residues 196 to 246; it reads DVVCDVCQSPDGEDGNEMVFCDKCNICVHQACYGILKVPEGSWLCRTCALG. The segment at 248–282 adopts a C2HC pre-PHD-type zinc-finger fold; the sequence is FPKCHLCPKKGGAMKPTRSGTKWVHVSCALWIPEV. A PHD-type 2 zinc finger spans residues 306–362; sequence LICCLCKEKTGACIQCSAKSCRVAFHVTCGLHCGLKMNTILTEADEVKFKSFCPKHS. 3 disordered regions span residues 368–408, 556–651, and 697–829; these read EEEG…PEET, PPVP…RRKS, and ATAP…VLAS. A compositionally biased stretch (basic and acidic residues) spans 374–390; it reads DRPVKVPTREDRSRNRG. Polar residues-rich tracts occupy residues 394 to 405, 570 to 586, and 607 to 619; these read SASSQTRLSQNP, GQNSTLSSSEKGSNSYR, and SGDSVRSETVMSA. The segment covering 622-648 has biased composition (basic and acidic residues); that stretch reads RRSEGRTRSGESHRKEEESERPLEDRR. Positions 697–714 are enriched in polar residues; the sequence is ATAPNMYSGSPRKTNASH. Residues 738-754 are compositionally biased toward basic and acidic residues; it reads KRSERTSAGRQTERQEA. A compositionally biased stretch (low complexity) spans 762–774; that stretch reads SSLKTFSTSPSSP. The span at 782-792 shows a compositional bias: basic and acidic residues; sequence TGSENRRHLEE.

Belongs to the JADE family. In terms of assembly, component of the HBO1 complex composed.

Its subcellular location is the nucleus. It localises to the chromosome. The protein localises to the cytoplasm. The protein resides in the cytoskeleton. It is found in the cilium basal body. Scaffold subunit of some HBO1 complexes, which have a histone H4 acetyltransferase activity. Plays a key role in HBO1 complex by directing KAT7/HBO1 specificity towards histone H4 acetylation (H4K5ac, H4K8ac and H4K12ac), regulating DNA replication initiation, regulating DNA replication initiation. In Danio rerio (Zebrafish), this protein is Protein Jade-1 (jade1).